A 761-amino-acid polypeptide reads, in one-letter code: MALAHILGYPRIGANRELKKAVEAYWKGDIDQAELERRGQALRAEHWQASRDAGLDFVTVGDFAFYDQVLNVSAMLGAVPPRFGAIDGDVDLDTTFRMARGRAPSGTPAAACEMTKYFDTNYHYLVPELHAGQRFRVASTRLFDEVAEAQAAGHPVKVALLGPVSWLWLGKEKSAGLDRLTLLDDVLSVYGEILERLAAQGVEWVQLDEPALVQDLPRDWRQAFESAYNKLQSAPVKLLLATYFGALGDNLGLAAGLPVAGLHIDTVRAPEQLDAVLDRLPTYKVLSLGAIDGRNIWRADLAALRERLQVARARLGERLWISASCSLLHVPVDLDAETDLDAELKSWLAFARQKLDEIVTLAHLLDGRATPEDTARLEAATSALDARRQSPRIHKPAVGERLAAVSADDAERASPYATRAKAQHRHLDLPLFPTTTIGSFPQTQDIRAARRAFKSGELSRDDYEARMRDEIAHAVERQEALAIDVPVHGEPERNDMVEYFGELLDGFAFTRFGWVQSYGSRCVKPPVIFGDVSRPGPMTVRWSEYAQSLTDKPMKGMLTGPVTILQWSFVRDDQPRDATCRQIALSLRDEVADLEAAGIKIIQIDEPALREGLPLRQGEWQEYLDWAVKSFKLSAAVARDETQIHTHMCYSEFNDIIAAIAALDADVITIETSRSDMELLDAFQDFAYPNEIGPGVYDIHSPNIPEVEWMVSLMEKAAEKIPAERLWVNPDCGLKTRGWAEVEPALANMVEAARELRRRYG.

5-methyltetrahydropteroyltri-L-glutamate contacts are provided by residues 16–19 (RELK) and lysine 116. L-homocysteine-binding positions include 437-439 (IGS) and glutamate 490. L-methionine contacts are provided by residues 437–439 (IGS) and glutamate 490. 5-methyltetrahydropteroyltri-L-glutamate contacts are provided by residues 521-522 (RC) and tryptophan 567. Aspartate 605 contributes to the L-homocysteine binding site. Residue aspartate 605 participates in L-methionine binding. Glutamate 611 is a binding site for 5-methyltetrahydropteroyltri-L-glutamate. Residues histidine 647, cysteine 649, and glutamate 671 each coordinate Zn(2+). Histidine 700 serves as the catalytic Proton donor. Cysteine 732 is a Zn(2+) binding site.

The protein belongs to the vitamin-B12 independent methionine synthase family. Requires Zn(2+) as cofactor.

The enzyme catalyses 5-methyltetrahydropteroyltri-L-glutamate + L-homocysteine = tetrahydropteroyltri-L-glutamate + L-methionine. The protein operates within amino-acid biosynthesis; L-methionine biosynthesis via de novo pathway; L-methionine from L-homocysteine (MetE route): step 1/1. Functionally, catalyzes the transfer of a methyl group from 5-methyltetrahydrofolate to homocysteine resulting in methionine formation. This Chromohalobacter salexigens (strain ATCC BAA-138 / DSM 3043 / CIP 106854 / NCIMB 13768 / 1H11) protein is 5-methyltetrahydropteroyltriglutamate--homocysteine methyltransferase.